The chain runs to 127 residues: Large ribosomal subunit protein bL17 (127 aa).

The protein belongs to the bacterial ribosomal protein bL17 family. In terms of assembly, part of the 50S ribosomal subunit. Contacts protein L32.

This is Large ribosomal subunit protein bL17 from Mannheimia succiniciproducens (strain KCTC 0769BP / MBEL55E).